The following is a 124-amino-acid chain: Large ribosomal subunit protein uL22c (124 aa).

The protein belongs to the universal ribosomal protein uL22 family. Part of the 50S ribosomal subunit.

Its subcellular location is the plastid. The protein localises to the chloroplast. Its function is as follows. This protein binds specifically to 23S rRNA. The globular domain of the protein is located near the polypeptide exit tunnel on the outside of the subunit, while an extended beta-hairpin is found that lines the wall of the exit tunnel in the center of the 70S ribosome. The polypeptide is Large ribosomal subunit protein uL22c (rpl22) (Amborella trichopoda).